We begin with the raw amino-acid sequence, 109 residues long: Nucleoid-associated protein Sputw3181_1707 (109 aa).

Belongs to the YbaB/EbfC family. In terms of assembly, homodimer.

The protein resides in the cytoplasm. It localises to the nucleoid. In terms of biological role, binds to DNA and alters its conformation. May be involved in regulation of gene expression, nucleoid organization and DNA protection. In Shewanella sp. (strain W3-18-1), this protein is Nucleoid-associated protein Sputw3181_1707.